A 338-amino-acid chain; its full sequence is MELRRGGVGNQAAGRRMDGDCRDGGCGSKDAGSEDYENLPTSASVSTHMTAGAMAGILEHSIMYPVDSVKTRMQSLNPDPKARYTSIYGALKRIMHTEGFWRPLRGLNVMMMGAGPAHAMYFACYENMKRTLNDVFSHQGNSHLANGVAGSMATLLHDAVMNPAEVVKQRLQMYNSQHQSAFSCIRTVWRTEGLGAFYRSYTTQLTMNIPFQSIHFITYEFLQEQVNPRRDYNPQSHIISGGLAGALAAAATTPLDVCKTLLNTQENMALSLANVSGRLSGMANAFRTVYQLNGLAGYFKGIQARVIYQMPSTAISWSVYEFFKYILTKRQLENRTLY.

The segment at 1-37 (MELRRGGVGNQAAGRRMDGDCRDGGCGSKDAGSEDYE) is disordered. Solcar repeat units follow at residues 43-131 (ASVS…MKRT), 141-225 (NSHL…LQEQ), and 232-326 (YNPQ…FKYI). The next 6 helical transmembrane spans lie at 45 to 64 (VSTH…SIMY), 106 to 125 (GLNV…FACY), 143 to 162 (HLAN…AVMN), 200 to 219 (SYTT…FITY), 234 to 253 (PQSH…AATT), and 301 to 320 (GIQA…WSVY).

The protein belongs to the mitochondrial carrier (TC 2.A.29) family. In terms of assembly, interacts with ACB10; this interaction stabilizes SLC25A37 and enhances the function of SLC25A37 to import mitochondrial iron during erythroid differentiation. Highly expressed in hematopoietic organs, fetal liver, bone marrow and spleen.

Its subcellular location is the mitochondrion inner membrane. It catalyses the reaction Fe(2+)(in) = Fe(2+)(out). Mitochondrial iron transporter that specifically mediates iron uptake in developing erythroid cells, thereby playing an essential role in heme biosynthesis. The sequence is that of Mitoferrin-1 (Slc25a37) from Mus musculus (Mouse).